Reading from the N-terminus, the 210-residue chain is Scoloptoxin SSD976 (210 aa).

The N-terminal stretch at 1-23 (MNILLSSTLFVLLMFQIIGSGMG) is a signal peptide.

Contains 3 disulfide bonds. In terms of tissue distribution, expressed by the venom gland.

Its subcellular location is the secreted. Its function is as follows. Voltage-gated calcium channel inhibitor. This chain is Scoloptoxin SSD976, found in Scolopendra dehaani (Thai centipede).